We begin with the raw amino-acid sequence, 719 residues long: Protein psiI (719 aa).

A signal peptide spans 1-19; it reads MKIIFNLLILFSLVNFINS. Over 20–658 the chain is Extracellular; sequence QSTTQATTLK…ICQTGAIVST (639 aa). 12 N-linked (GlcNAc...) asparagine glycosylation sites follow: N62, N105, N118, N151, N315, N379, N454, N488, N500, N538, N592, and N629. Positions 119-261 constitute a PA14 domain; that stretch reads LTLNPSTGTY…YDYCGVCYGD (143 aa). The chain crosses the membrane as a helical span at residues 659-679; it reads AVVASVVVVGAVVLGAAIFAG. The Cytoplasmic segment spans residues 680–719; the sequence is KKGYDHWKANQGQVFASSNANPLYQQSNNGGENALFEAPQ.

The protein belongs to the prespore-cell-inducing factor family.

The protein resides in the membrane. This Dictyostelium discoideum (Social amoeba) protein is Protein psiI (psiI).